A 489-amino-acid chain; its full sequence is IPT/TIG domain-containing protein BACOVA_02650 (489 aa).

Residues 1-27 (MKSIYKYLDTRLFLIGLLVLPFLAVVS) form the signal peptide. The N-palmitoyl cysteine moiety is linked to residue Cys28. Cys28 carries the S-diacylglycerol cysteine lipid modification. IPT/TIG domains lie at 57–103 (VNPG…PNEL), 136–204 (PYIT…TAPA), and 232–304 (PVVT…AIGG).

The protein localises to the cell outer membrane. Its pathway is glucan metabolism; xyloglucan degradation. In terms of biological role, polysaccharide-binding protein present at the surface of the cell. Probably mediates xyloglucan-binding before xyloglucan transport in the periplasm for degradation. This is IPT/TIG domain-containing protein BACOVA_02650 from Bacteroides ovatus (strain ATCC 8483 / DSM 1896 / JCM 5824 / BCRC 10623 / CCUG 4943 / NCTC 11153).